The primary structure comprises 833 residues: Homeobox-leucine zipper protein ATHB-8 (833 aa).

The segment at residues 12-75 is a DNA-binding region (homeobox); sequence DNGKYVRYTP…NRRCREKQRK (64 aa). Positions 70 to 108 form a coiled coil; it reads REKQRKEASRLQAVNRKLTAMNKLLMEENDRLQKQVSHL. The START domain maps to 150–378; it reads RDASPAGLLS…ISQEISQPNV (229 aa).

Belongs to the HD-ZIP homeobox family. Class III subfamily. Interacts with ESR1 and ESR2. Interacts with ZPR3.

It localises to the nucleus. In terms of biological role, probable transcription factor involved in the regulation of vascular development. May promote differentiation of precambial and cambial cells. The chain is Homeobox-leucine zipper protein ATHB-8 (ATHB-8) from Arabidopsis thaliana (Mouse-ear cress).